A 352-amino-acid chain; its full sequence is tRNA pseudouridine synthase D (352 aa).

Residue Asp-81 is the Nucleophile of the active site. In terms of domain architecture, TRUD spans 157–303 (GVPNYFGAQR…MDHERRILRL (147 aa)).

This sequence belongs to the pseudouridine synthase TruD family.

It catalyses the reaction uridine(13) in tRNA = pseudouridine(13) in tRNA. Its function is as follows. Responsible for synthesis of pseudouridine from uracil-13 in transfer RNAs. This chain is tRNA pseudouridine synthase D, found in Pseudomonas entomophila (strain L48).